The following is a 338-amino-acid chain: Protein FosB (338 aa).

Disordered stretches follow at residues 1 to 54 (MFQA…PGSF), 79 to 191 (MAQS…DQLE), 222 to 276 (CKIP…PPNL), and 316 to 338 (GAQR…LLAL). Composition is skewed to polar residues over residues 13-31 (SRCS…SVDS) and 79-88 (MAQSQGQPLA). Position 27 is a phosphoserine (Ser-27). Over residues 113–124 (SSGGASGSGGPS) the composition is skewed to gly residues. The span at 125 to 137 (TSGTTSGPGPARP) shows a compositional bias: low complexity. Positions 155-218 (EEKRRVRRER…ERLEFVLVAH (64 aa)) constitute a bZIP domain. The segment at 157–182 (KRRVRRERNKLAAAKCRNRRRELTDR) is basic motif. Residues 183 to 211 (LQAETDQLEEEKAELESEIAELQKEKERL) form a leucine-zipper region. A compositionally biased stretch (pro residues) spans 256-265 (LPPPPPPPLP). 2 stretches are compositionally biased toward polar residues: residues 266-276 (FQTSQDAPPNL) and 318-338 (QRTS…LLAL).

This sequence belongs to the bZIP family. Fos subfamily. As to quaternary structure, heterodimer; binds to DNA as heterodimer. Component of an AP-1 transcription factor complex; composed of FOS-JUN heterodimers. As part of the AP-1 transcription factor complex, forms heterodimers with JUN, JUNB or JUND, thereby binding to the AP-1 consensus sequence and stimulating transcription. Interacts with the BAF multiprotein chromatin-remodeling complex subunits SMARCB1 and SMARCD1. Interacts with ARID1A and JUN. In terms of assembly, homodimer under oxidizing conditions and monomer under reducing conditions (in vitro). Heterodimer; binds to DNA as heterodimer. Forms heterodimers with JUNB, JUN or JUND; thereby binding to the AP-1 consensus sequence but does not stimulate transcription. Forms heterodimers with JUND under oxidizing conditions. In terms of processing, phosphorylated. Post-translationally, phosphorylated at Ser-27 by CSNK2A1; phosphorylation increases protein stability and transactivation potential. Expressed in the nucleus accumbens of the striatum (at protein level).

Its subcellular location is the nucleus. Its function is as follows. Heterodimerizes with proteins of the JUN family to form an AP-1 transcription factor complex, thereby enhancing their DNA binding activity to gene promoters containing an AP-1 consensus sequence 5'-TGA[GC]TCA-3' and enhancing their transcriptional activity. As part of the AP-1 complex, facilitates enhancer selection together with cell-type-specific transcription factors by collaboratively binding to nucleosomal enhancers and recruiting the SWI/SNF (BAF) chromatin remodeling complex to establish accessible chromatin. Together with JUN, plays a role in activation-induced cell death of T cells by binding to the AP-1 promoter site of FASLG/CD95L, and inducing its transcription in response to activation of the TCR/CD3 signaling pathway. Exhibits transactivation activity in vitro. Involved in the display of nurturing behavior towards newborns. May play a role in neurogenesis in the hippocampus and in learning and memory-related tasks by regulating the expression of various genes involved in neurogenesis, depression and epilepsy. Implicated in behavioral responses related to morphine reward and spatial memory. In terms of biological role, exhibits lower transactivation activity than isoform 1 in vitro. The heterodimer with JUN does not display any transcriptional activity, and may thereby act as an transcriptional inhibitor. May be involved in the regulation of neurogenesis in the hippocampus. May play a role in synaptic modifications in nucleus accumbens medium spiny neurons and thereby play a role in adaptive and pathological reward-dependent learning, including maladaptive responses involved in drug addiction. Seems to be more stably expressed with a half-life of ~9.5 hours in cell culture as compared to 1.5 hours half-life of isoform 1. The chain is Protein FosB (FOSB) from Homo sapiens (Human).